A 220-amino-acid chain; its full sequence is Photosynthetic NDH subunit of lumenal location 3, chloroplastic (220 aa).

The transit peptide at 1 to 35 (MAHFIDLNSLTNTLPSLPKLPESRKTGKSSGFACR) directs the protein to the chloroplast. Residues 36 to 77 (RTEEFQEPDSVQITRRMTLGFAVSIGLTGILGENNVSLAQDN) constitute a thylakoid transit peptide.

Belongs to the PsbQ family. Part of the chloroplast NDH complex, composed of a mixture of chloroplast and nucleus encoded subunits. Component of the NDH lumenal subcomplex, at least composed of PnsL1, PnsL2, PnsL3, PnsL4 and PnsL5.

It is found in the plastid. The protein localises to the chloroplast thylakoid membrane. Functionally, NDH shuttles electrons from NAD(P)H:plastoquinone, via FMN and iron-sulfur (Fe-S) centers, to quinones in the photosynthetic chain and possibly in a chloroplast respiratory chain. The immediate electron acceptor for the enzyme in this species is believed to be plastoquinone. Couples the redox reaction to proton translocation, and thus conserves the redox energy in a proton gradient. Required for both formation and activity of the chloroplast NAD(P)H dehydrogenase (NDH) complex. The sequence is that of Photosynthetic NDH subunit of lumenal location 3, chloroplastic from Arabidopsis thaliana (Mouse-ear cress).